A 158-amino-acid polypeptide reads, in one-letter code: 6,7-dimethyl-8-ribityllumazine synthase (158 aa).

Residues Phe22, 57–59 (SYE), and 81–83 (TVI) contribute to the 5-amino-6-(D-ribitylamino)uracil site. His89 serves as the catalytic Proton donor. Residue Phe114 coordinates 5-amino-6-(D-ribitylamino)uracil. Position 128 (Arg128) interacts with (2S)-2-hydroxy-3-oxobutyl phosphate.

The protein belongs to the DMRL synthase family. Forms an icosahedral capsid composed of 60 subunits, arranged as a dodecamer of pentamers.

The enzyme catalyses (2S)-2-hydroxy-3-oxobutyl phosphate + 5-amino-6-(D-ribitylamino)uracil = 6,7-dimethyl-8-(1-D-ribityl)lumazine + phosphate + 2 H2O + H(+). It functions in the pathway cofactor biosynthesis; riboflavin biosynthesis; riboflavin from 2-hydroxy-3-oxobutyl phosphate and 5-amino-6-(D-ribitylamino)uracil: step 1/2. Catalyzes the formation of 6,7-dimethyl-8-ribityllumazine by condensation of 5-amino-6-(D-ribitylamino)uracil with 3,4-dihydroxy-2-butanone 4-phosphate. This is the penultimate step in the biosynthesis of riboflavin. This is 6,7-dimethyl-8-ribityllumazine synthase from Blochmanniella pennsylvanica (strain BPEN).